Here is a 555-residue protein sequence, read N- to C-terminus: MKTDVEIAQSAKMQPITEIADRIGIEPNELELYGSYKAKISLDIMKRIEDKPQGKLVLVTAISPTPAGEGKTTTTIGLGQALNKIGKKAIVALREPSLGPVFGIKGGATGGGYAQVVPMEDINLHFTGDIHAVTTAHNLLAALMDNHLHQGNELDIDSRQIVWRRVMDLNERVLRNIVLGLGGRINGVPRESGFDISVASEVMAALCLATDLMDLKERFAKIVVAYSQQGQAITAGDLKAAGSMALLMKDAIKPNLVQTLENTPAFIHGGPFANIAHGANSIVATRLGVKLADYMVTEAGFGADLGAEKFFNIVCRYGKLVPDAVVLVASIRALKHHGGVKKDKLGEENLEALAQGMENLKKHLENIQKFGVPAVVALNEFPSDTSKEIDYVFSQCAAMQTAVSISRVWAQGGEGGIDLAEKLVLATEQGSQFKFLYELNQPLKNKIETICREIYGAGSVKYAAEAKRMLQKYEESGFGDLPVCIAKTQYSLSDNAQLLGRPTGFEVNIRQVKLSAGAGFVVALAGDIMTMPGLGKVPAAENIDIKPDGEIVGLF.

65-72 provides a ligand contact to ATP; the sequence is TPAGEGKT.

The protein belongs to the formate--tetrahydrofolate ligase family.

It carries out the reaction (6S)-5,6,7,8-tetrahydrofolate + formate + ATP = (6R)-10-formyltetrahydrofolate + ADP + phosphate. Its pathway is one-carbon metabolism; tetrahydrofolate interconversion. This chain is Formate--tetrahydrofolate ligase, found in Syntrophomonas wolfei subsp. wolfei (strain DSM 2245B / Goettingen).